A 527-amino-acid chain; its full sequence is Glutamyl-tRNA reductase 1, chloroplastic (527 aa).

Residues 1 to 43 (MAGATSATAAAGAFAAAKARGPAAACPWLVAAGGRRRSGVVRC) constitute a chloroplast transit peptide. Residues 124 to 127 (TCNR), Ser184, 189 to 191 (EGQ), and Gln195 contribute to the substrate site. Catalysis depends on Cys125, which acts as the Nucleophile. 266 to 271 (GAGKMG) is a binding site for NADP(+).

It belongs to the glutamyl-tRNA reductase family. In terms of assembly, homodimer.

Its subcellular location is the plastid. It is found in the chloroplast. The catalysed reaction is (S)-4-amino-5-oxopentanoate + tRNA(Glu) + NADP(+) = L-glutamyl-tRNA(Glu) + NADPH + H(+). The protein operates within porphyrin-containing compound metabolism; protoporphyrin-IX biosynthesis; 5-aminolevulinate from L-glutamyl-tRNA(Glu): step 1/2. Catalyzes the NADPH-dependent reduction of glutamyl-tRNA(Glu) to glutamate 1-semialdehyde (GSA). This is Glutamyl-tRNA reductase 1, chloroplastic (HEMA1) from Hordeum vulgare (Barley).